A 173-amino-acid polypeptide reads, in one-letter code: Alpha-crystallin A chain (173 aa).

An N-acetylmethionine modification is found at M1. The required for complex formation with BFSP1 and BFSP2 stretch occupies residues 1–63; that stretch reads MDIAIQHPWF…RTVLDSGISE (63 aa). A Deamidated glutamine; partial modification is found at Q6. Residue S45 is modified to Phosphoserine. Deamidated glutamine; partial is present on Q50. Residues 52 to 162 enclose the sHSP domain; sequence LFRTVLDSGI…GHSERAIPVS (111 aa). N6-acetyllysine is present on residues K70 and K99. Residue H100 coordinates Zn(2+). Deamidated asparagine; partial is present on N101. Residues E102 and H107 each contribute to the Zn(2+) site. Residue S122 is modified to Phosphoserine. Position 123 is a deamidated asparagine; partial (N123). The interval 144–173 is disordered; it reads PKVPSGMDAGHSERAIPVSREEKPSSAPSS. Basic and acidic residues predominate over residues 153-167; it reads GHSERAIPVSREEKP. H154 provides a ligand contact to Zn(2+). The O-linked (GlcNAc) serine glycan is linked to S162.

It belongs to the small heat shock protein (HSP20) family. As to quaternary structure, heteromer composed of three CRYAA and one CRYAB subunits. Inter-subunit bridging via zinc ions enhances stability, which is crucial as there is no protein turn over in the lens. Can also form homodimers and homotetramers (dimers of dimers) which serve as the building blocks of homooligomers. Within homooligomers, the zinc-binding motif is created from residues of 3 different molecules. His-100 and Glu-102 from one molecule are ligands of the zinc ion, and His-107 and His-154 residues from additional molecules complete the site with tetrahedral coordination geometry. Part of a complex required for lens intermediate filament formation composed of BFSP1, BFSP2 and CRYAA. Post-translationally, acetylation at Lys-70 may increase chaperone activity. In terms of processing, undergoes age-dependent proteolytical cleavage at the C-terminus.

Its subcellular location is the cytoplasm. The protein localises to the nucleus. Contributes to the transparency and refractive index of the lens. Acts as a chaperone, preventing aggregation of various proteins under a wide range of stress conditions. Required for the correct formation of lens intermediate filaments as part of a complex composed of BFSP1, BFSP2 and CRYAA. This is Alpha-crystallin A chain (CRYAA) from Melursus ursinus (Sloth bear).